The primary structure comprises 160 residues: Transmembrane protein 191A (160 aa).

Residues 24-44 (FCFPLDFVSNLFWIFASKFII) traverse the membrane as a helical segment.

Belongs to the TMEM191 family.

It localises to the membrane. This Homo sapiens (Human) protein is Transmembrane protein 191A (TMEM191A).